An 81-amino-acid chain; its full sequence is Photosystem I iron-sulfur center (81 aa).

4Fe-4S ferredoxin-type domains lie at 2 to 31 and 39 to 68; these read AHIV…MVPW and MASA…VRVY. [4Fe-4S] cluster-binding residues include Cys-11, Cys-14, Cys-17, Cys-21, Cys-48, Cys-51, Cys-54, and Cys-58.

The eukaryotic PSI reaction center is composed of at least 11 subunits. Requires [4Fe-4S] cluster as cofactor.

It localises to the plastid. The protein resides in the chloroplast thylakoid membrane. The enzyme catalyses reduced [plastocyanin] + hnu + oxidized [2Fe-2S]-[ferredoxin] = oxidized [plastocyanin] + reduced [2Fe-2S]-[ferredoxin]. Its function is as follows. Apoprotein for the two 4Fe-4S centers FA and FB of photosystem I (PSI); essential for photochemical activity. FB is the terminal electron acceptor of PSI, donating electrons to ferredoxin. The C-terminus interacts with PsaA/B/D and helps assemble the protein into the PSI complex. Required for binding of PsaD and PsaE to PSI. PSI is a plastocyanin/cytochrome c6-ferredoxin oxidoreductase, converting photonic excitation into a charge separation, which transfers an electron from the donor P700 chlorophyll pair to the spectroscopically characterized acceptors A0, A1, FX, FA and FB in turn. The protein is Photosystem I iron-sulfur center of Chlamydomonas reinhardtii (Chlamydomonas smithii).